Here is a 702-residue protein sequence, read N- to C-terminus: SAGA complex subunit NGG1 (702 aa).

The segment covering 1-10 (MPRHGRRGKL) has biased composition (basic residues). Disordered regions lie at residues 1-29 (MPRH…PSKL) and 90-224 (LRKI…VKNP). Composition is skewed to basic and acidic residues over residues 11–22 (PKGEKLPKKEGG) and 90–108 (LRKI…EKQE). Polar residues predominate over residues 109 to 125 (TSNADGQHESSTATEET). The residue at position 134 (serine 134) is a Phosphoserine. The span at 162 to 219 (MAKEEINEDKDLQVHRDQPREKRPFDSETENRATENENTQRPDNKKQKIDVDKMENDP) shows a compositional bias: basic and acidic residues. Phosphoserine is present on serine 407. Threonine 464 carries the phosphothreonine modification. The Nuclear localization signal signature appears at 606–618 (KRIRVPKKRKKHH). 2 disordered regions span residues 611–636 (PKKR…IAQQ) and 672–702 (NESV…VELN). Polar residues predominate over residues 620 to 636 (AASNNVNTGTTSQIAQQ). Residues 680–689 (DQEEDEDEAD) are compositionally biased toward acidic residues.

It belongs to the NGG1 family. Component of the 1.8 MDa SAGA (Spt-Ada-Gcn5 acetyltransferase) complex, which is composed of 19 subunits TRA1, SPT7, TAF5, NGG1/ADA3, SGF73, SPT20/ADA5, SPT8, TAF12, TAF6, HFI1/ADA1, UBP8, GCN5, ADA2, SPT3, SGF29, TAF10, TAF9, SGF11 and SUS1. The SAGA complex is composed of 4 modules, namely the HAT (histone acetyltransferase) module (GCN5, ADA2, NGG1/ADA3 and SGF29), the DUB (deubiquitinating) module (UBP8, SGF11, SGF73 and SUS1), the core or TAF (TBP-associated factor) module (TAF5, TAF6, TAF9, TAF10 and TAF12), and the Tra1 or SPT (Suppressor of Ty) module (TRA1, HFI1/ADA1, SPT3, SPT7, SPT8 and SPT20/ADA5). The Tra1/SPT module binds activators, the core module recruits TBP (TATA-binding protein), the HAT module contains the histone H3 acetyltransferase GCN5, and the DUB module comprises the histone H2B deubiquitinase UBP8. Also identified in an altered form of SAGA, named SALSA (SAGA altered, Spt8 absent) or SLIK (SAGA-like) complex, which contains a C-terminal truncated form of SPT7 and is missing SPT8. However, it has been shown that the SAGA and SAGA-like SALSA/SLIK transcriptional coactivators are structurally and biochemically equivalent. Component of the 0.8 MDa ADA complex, a HAT complex distinct from SAGA, which at least consists of ADA2, NGG1/ADA3, AHC1, AHC2, SGF29 and GCN5. Identified in an Ada.spt complex with SPT7 and TRA1. Component of an ADA/GCN5 complex that consists of HFI1/ADA1, ADA2, NGG1/ADA3, SPT20/ADA5 and GCN5 and probably is a subcomplex of SAGA.

It localises to the nucleus. In terms of biological role, component of the transcription coactivator SAGA complex. SAGA acts as a general cofactor required for essentially all RNA polymerase II transcription. At the promoters, SAGA is required for transcription pre-initiation complex (PIC) recruitment. It influences RNA polymerase II transcriptional activity through different activities such as TBP interaction (via core/TAF module) and promoter selectivity, interaction with transcription activators (via Tra1/SPT module), and chromatin modification through histone acetylation (via HAT module) and deubiquitination (via DUB module). SAGA preferentially acetylates histones H3 (to form H3K9ac, H3K14ac, H3K18ac and H3K23ac) and H2B and deubiquitinates histone H2B. SAGA interacts with DNA via upstream activating sequences (UASs). Also identified in a modified version of SAGA named SALSA or SLIK. The cleavage of SPT7 and the absence of the SPT8 subunit in SLIK neither drive any major conformational differences in its structure compared with SAGA, nor significantly affect HAT, DUB, or DNA-binding activities. Component of the ADA histone acetyltransferase complex, which preferentially acetylates nucleosomal histones H3 (to form H3K14ac and H3K18ac) and H2B. May be involved in response to DNA damage by genotoxic agents. The sequence is that of SAGA complex subunit NGG1 (NGG1) from Saccharomyces cerevisiae (strain ATCC 204508 / S288c) (Baker's yeast).